A 1106-amino-acid chain; its full sequence is Carbamoyl phosphate synthase large chain (1106 aa).

The interval 1–402 (MPRREDIRSV…SFQKALRSLE (402 aa)) is carboxyphosphate synthetic domain. ATP is bound by residues Arg-129, Arg-169, Gly-175, Gly-176, Glu-208, Val-210, Glu-215, Gly-241, Val-242, His-243, Gln-285, and Glu-299. Residues 133–328 (KKAMEKIGVR…IAKIAALLSI (196 aa)) enclose the ATP-grasp 1 domain. Mg(2+) contacts are provided by Gln-285, Glu-299, and Asn-301. 3 residues coordinate Mn(2+): Gln-285, Glu-299, and Asn-301. The segment at 403-582 (IDRYGFGSDG…YSSYDEEDES (180 aa)) is oligomerization domain. Residues 583–964 (DVTNAKSVMI…AFLKSQYMAG (382 aa)) are carbamoyl phosphate synthetic domain. The ATP-grasp 2 domain occupies 707 to 898 (VEVLEKLKLN…IVKYATRIMM (192 aa)). Arg-743, Ser-782, Leu-784, Glu-789, Gly-814, Ile-815, His-816, Ser-817, Gln-857, and Glu-869 together coordinate ATP. The Mg(2+) site is built by Gln-857, Glu-869, and Asn-871. Positions 857, 869, and 871 each coordinate Mn(2+). In terms of domain architecture, MGS-like spans 965-1106 (DELPSQGTVF…QEIHAMPKIL (142 aa)). The allosteric domain stretch occupies residues 965–1106 (DELPSQGTVF…QEIHAMPKIL (142 aa)).

This sequence belongs to the CarB family. In terms of assembly, composed of two chains; the small (or glutamine) chain promotes the hydrolysis of glutamine to ammonia, which is used by the large (or ammonia) chain to synthesize carbamoyl phosphate. Tetramer of heterodimers (alpha,beta)4. Mg(2+) serves as cofactor. Mn(2+) is required as a cofactor.

The enzyme catalyses hydrogencarbonate + L-glutamine + 2 ATP + H2O = carbamoyl phosphate + L-glutamate + 2 ADP + phosphate + 2 H(+). It catalyses the reaction hydrogencarbonate + NH4(+) + 2 ATP = carbamoyl phosphate + 2 ADP + phosphate + 2 H(+). It participates in amino-acid biosynthesis; L-arginine biosynthesis; carbamoyl phosphate from bicarbonate: step 1/1. It functions in the pathway pyrimidine metabolism; UMP biosynthesis via de novo pathway; (S)-dihydroorotate from bicarbonate: step 1/3. In terms of biological role, large subunit of the glutamine-dependent carbamoyl phosphate synthetase (CPSase). CPSase catalyzes the formation of carbamoyl phosphate from the ammonia moiety of glutamine, carbonate, and phosphate donated by ATP, constituting the first step of 2 biosynthetic pathways, one leading to arginine and/or urea and the other to pyrimidine nucleotides. The large subunit (synthetase) binds the substrates ammonia (free or transferred from glutamine from the small subunit), hydrogencarbonate and ATP and carries out an ATP-coupled ligase reaction, activating hydrogencarbonate by forming carboxy phosphate which reacts with ammonia to form carbamoyl phosphate. The protein is Carbamoyl phosphate synthase large chain of Leptospira interrogans serogroup Icterohaemorrhagiae serovar copenhageni (strain Fiocruz L1-130).